The chain runs to 248 residues: 3-deoxy-manno-octulosonate cytidylyltransferase (248 aa).

It belongs to the KdsB family.

The protein resides in the cytoplasm. The enzyme catalyses 3-deoxy-alpha-D-manno-oct-2-ulosonate + CTP = CMP-3-deoxy-beta-D-manno-octulosonate + diphosphate. It participates in nucleotide-sugar biosynthesis; CMP-3-deoxy-D-manno-octulosonate biosynthesis; CMP-3-deoxy-D-manno-octulosonate from 3-deoxy-D-manno-octulosonate and CTP: step 1/1. The protein operates within bacterial outer membrane biogenesis; lipopolysaccharide biosynthesis. Activates KDO (a required 8-carbon sugar) for incorporation into bacterial lipopolysaccharide in Gram-negative bacteria. This chain is 3-deoxy-manno-octulosonate cytidylyltransferase, found in Enterobacter sp. (strain 638).